The sequence spans 149 residues: MNKGQRHIKIREIIANKEIETQDELVDILRNEGFNVTQATVSRDIKELHLVKVPLHDGRYKYSLPADQRFNPLQKLKRNLVDSFVKLDTAGHMLVLKTLPGNAHSLGALIDHLEWDEIIGTICGDDTCLIICRTPEDTGVVSDRFLNML.

Belongs to the ArgR family.

The protein resides in the cytoplasm. Its pathway is amino-acid biosynthesis; L-arginine biosynthesis [regulation]. In terms of biological role, regulates arginine biosynthesis genes. This chain is Arginine repressor, found in Bacillus cereus (strain ATCC 10987 / NRS 248).